Reading from the N-terminus, the 169-residue chain is MLRSEKPVAVEDIVNIYKESPSIIITHYHGLTVSQVSSLRESLKSKEAGFKVVKNTLAKIAANQTGLDSIANLFAGPTAIVYSKEPVEMAKLVVNFAKANDNLKIIGGIVDNHVLDEHSIKELSKLPALNELRGKIVGLLQAPATKVVGVLQAPSSSMARVIQAHASKN.

The protein belongs to the universal ribosomal protein uL10 family. In terms of assembly, part of the ribosomal stalk of the 50S ribosomal subunit. The N-terminus interacts with L11 and the large rRNA to form the base of the stalk. The C-terminus forms an elongated spine to which L12 dimers bind in a sequential fashion forming a multimeric L10(L12)X complex.

Functionally, forms part of the ribosomal stalk, playing a central role in the interaction of the ribosome with GTP-bound translation factors. This chain is Large ribosomal subunit protein uL10, found in Rickettsia massiliae (strain Mtu5).